A 942-amino-acid polypeptide reads, in one-letter code: DNA polymerase I (942 aa).

Residues 177 to 269 (EPDQLADLRG…LEAARIGVYD (93 aa)) form the 5'-3' exonuclease domain. One can recognise a 3'-5' exonuclease domain in the interval 340–522 (TIVRDATALA…LTERLQRQLE (183 aa)).

This sequence belongs to the DNA polymerase type-A family. Single-chain monomer with multiple functions.

It carries out the reaction DNA(n) + a 2'-deoxyribonucleoside 5'-triphosphate = DNA(n+1) + diphosphate. In terms of biological role, in addition to polymerase activity, this DNA polymerase exhibits 3'-5' and 5'-3' exonuclease activity. This is DNA polymerase I (polA) from Chloroflexus aurantiacus (strain ATCC 29366 / DSM 635 / J-10-fl).